The primary structure comprises 142 residues: Hemoglobin subunit zeta (142 aa).

Ser-2 carries the N-acetylserine modification. One can recognise a Globin domain in the interval 2–142; it reads SLTKTEGTII…VSSVLTEKYR (141 aa). Thr-29 carries the post-translational modification Phosphothreonine. At Ser-53 the chain carries Phosphoserine. Residue His-59 participates in heme b binding. Ser-73 and Ser-82 each carry phosphoserine. His-88 contacts heme b.

This sequence belongs to the globin family. Heterotetramer of two zeta chains and beta-type chains.

The zeta chain is an alpha-type chain of mammalian embryonic hemoglobin. This chain is Hemoglobin subunit zeta (HBZ1), found in Pan troglodytes (Chimpanzee).